The chain runs to 468 residues: 3-isopropylmalate dehydratase large subunit (468 aa).

Positions 349, 409, and 412 each coordinate [4Fe-4S] cluster.

This sequence belongs to the aconitase/IPM isomerase family. LeuC type 1 subfamily. As to quaternary structure, heterodimer of LeuC and LeuD. The cofactor is [4Fe-4S] cluster.

The enzyme catalyses (2R,3S)-3-isopropylmalate = (2S)-2-isopropylmalate. Its pathway is amino-acid biosynthesis; L-leucine biosynthesis; L-leucine from 3-methyl-2-oxobutanoate: step 2/4. In terms of biological role, catalyzes the isomerization between 2-isopropylmalate and 3-isopropylmalate, via the formation of 2-isopropylmaleate. The polypeptide is 3-isopropylmalate dehydratase large subunit (Shewanella baltica (strain OS185)).